A 188-amino-acid chain; its full sequence is uncharacterized protein (188 aa).

The segment at 57 to 80 (NDDVAPVAEGPKQERRSPSRNIGR) is disordered.

The protein belongs to the transposase 25 family.

This is an uncharacterized protein from Sinorhizobium fredii (strain NBRC 101917 / NGR234).